A 129-amino-acid polypeptide reads, in one-letter code: Phosphoribosyl-AMP cyclohydrolase (129 aa).

D78 is a binding site for Mg(2+). C79 contacts Zn(2+). Positions 80 and 82 each coordinate Mg(2+). C96 and C103 together coordinate Zn(2+).

It belongs to the PRA-CH family. Homodimer. Mg(2+) serves as cofactor. The cofactor is Zn(2+).

The protein localises to the cytoplasm. The catalysed reaction is 1-(5-phospho-beta-D-ribosyl)-5'-AMP + H2O = 1-(5-phospho-beta-D-ribosyl)-5-[(5-phospho-beta-D-ribosylamino)methylideneamino]imidazole-4-carboxamide. The protein operates within amino-acid biosynthesis; L-histidine biosynthesis; L-histidine from 5-phospho-alpha-D-ribose 1-diphosphate: step 3/9. Catalyzes the hydrolysis of the adenine ring of phosphoribosyl-AMP. The sequence is that of Phosphoribosyl-AMP cyclohydrolase from Nitrosomonas eutropha (strain DSM 101675 / C91 / Nm57).